A 201-amino-acid chain; its full sequence is Recombination protein RecR (201 aa).

A C4-type zinc finger spans residues 59–74; sequence CSRCQNFCEAELCSIC. The region spanning 82–177 is the Toprim domain; it reads RVLCVVESPT…PVSRIAHGIP (96 aa).

It belongs to the RecR family.

Functionally, may play a role in DNA repair. It seems to be involved in an RecBC-independent recombinational process of DNA repair. It may act with RecF and RecO. This Hahella chejuensis (strain KCTC 2396) protein is Recombination protein RecR.